The following is a 310-amino-acid chain: Olfactory receptor 2A7 (310 aa).

Residues 1–24 (MGDNITSITEFLLLGFPVGPRIQM) lie on the Extracellular side of the membrane. Asn4 carries an N-linked (GlcNAc...) asparagine glycan. Residues 25–48 (LLFGLFSLFYVFTLLGNGTILGLI) traverse the membrane as a helical segment. Over 49 to 56 (SLDSRLHA) the chain is Cytoplasmic. The chain crosses the membrane as a helical span at residues 57–78 (PMYFFLSHLAVVDIAYACNTVP). Over 79–99 (RMLVNLLHPAKPISFAGRMMQ) the chain is Extracellular. The helical transmembrane segment at 100–119 (TFLFSTFAVTECLLLVVMSY) threads the bilayer. Residues 120–138 (DLYVAICHPLRYLAIMTWR) are Cytoplasmic-facing. A helical transmembrane segment spans residues 139 to 157 (VCITLAVTSWTTGVLLSLI). Residues 158–194 (HLVLLLPLPFCRPQKIYHFFCEILAVLKLACADTHIN) are Extracellular-facing. The chain crosses the membrane as a helical span at residues 195-218 (ENMVLAGAISGLVGPLSTIVVSYM). Residues 219–235 (CILCAILQIQSREVQRK) are Cytoplasmic-facing. A helical membrane pass occupies residues 236–258 (AFCTCFSHLCVIGLFYGTAIIMY). Topologically, residues 259–271 (VGPRYGNPKEQKK) are extracellular. Residues 272 to 291 (YLLLFHSLFNPMLNPLICSL) form a helical membrane-spanning segment. The Cytoplasmic segment spans residues 292-310 (RNSEVKNTLKRVLGVERAL).

The protein belongs to the G-protein coupled receptor 1 family.

It localises to the cell membrane. Odorant receptor. The polypeptide is Olfactory receptor 2A7 (OR2A7) (Homo sapiens (Human)).